The chain runs to 375 residues: Alcohol dehydrogenase E chain (375 aa).

At Ser2 the chain carries N-acetylserine. Zn(2+) is bound by residues Cys47, Ser49, His68, Cys98, Cys101, Cys104, Cys112, and Cys175. Positions 49 and 68 each coordinate an alcohol. Ser49 provides a ligand contact to NAD(+). Residues 200-205, Asp224, Lys229, Val293, 293-295, Phe320, and Arg370 contribute to the NAD(+) site; these read GLGGVG and VGV.

This sequence belongs to the zinc-containing alcohol dehydrogenase family. Class-I subfamily. As to quaternary structure, dimer of identical or non-identical chains of two types (E and S) coded by 2 separate genes at different loci. Requires Zn(2+) as cofactor.

It localises to the cytoplasm. The enzyme catalyses a primary alcohol + NAD(+) = an aldehyde + NADH + H(+). It carries out the reaction a secondary alcohol + NAD(+) = a ketone + NADH + H(+). The sequence is that of Alcohol dehydrogenase E chain from Equus caballus (Horse).